We begin with the raw amino-acid sequence, 600 residues long: Xylulose kinase (600 aa).

Residue 79–82 coordinates substrate; that stretch reads WLEA. Serine 244 is subject to Phosphoserine. Substrate is bound at residue aspartate 299. Residues glycine 358 and 505-509 each bind ATP; that span reads GASKN.

The protein belongs to the FGGY kinase family.

It is found in the cytoplasm. It catalyses the reaction D-xylulose + ATP = D-xylulose 5-phosphate + ADP + H(+). Its function is as follows. Xylulose kinase necessary for growth in culture media with D-xylulose as the solecarbon source. The protein is Xylulose kinase of Saccharomyces cerevisiae (strain ATCC 204508 / S288c) (Baker's yeast).